Reading from the N-terminus, the 961-residue chain is DNA replication licensing factor MCM2 (961 aa).

Positions 1-17 are enriched in polar residues; the sequence is MDDSENNAPSTPGSPGF. 2 disordered regions span residues 1–81 and 120–220; these read MDDS…FNDN and AEAE…EEDE. Over residues 39 to 78 the composition is skewed to acidic residues; it reads SDDDDDDVVGAEEAEVDPNVLPEDDGVVAAEEEEDGEDLF. Composition is skewed to basic and acidic residues over residues 120-146 and 166-176; these read AEAELDARDVRTGAAPDRKLPRMLHDQ and PPREPRTPRSD. Acidic residues predominate over residues 205-220; the sequence is QTDDDPYEDEFDEEDE. The C4-type zinc finger occupies 380–406; it reads CSKCGTVLGPFFQNSYTEVKVGSCPEC. Residues 524–730 enclose the MCM domain; the sequence is IGERIVKSIA…FTDEMLARFV (207 aa). Residue 574 to 581 participates in ATP binding; it reads GDPGTAKS. The Arginine finger signature appears at 706–709; the sequence is SRFD.

Belongs to the MCM family. In terms of assembly, component of the minichromosome maintenance (MCM) complex, a heterotetramer composed of MCM2, MCM3, MCM4, MCM5, MCM6 and MCM7. Interacts with CSN5. In terms of tissue distribution, widely expressed, with higher expression in developing tissues.

Its subcellular location is the nucleus. The catalysed reaction is ATP + H2O = ADP + phosphate + H(+). In terms of biological role, probable component of the MCM2-7 complex (MCM complex) that may function as a DNA helicase and which is essential to undergo a single round of replication initiation and elongation per cell cycle in eukaryotic cells. Can complement the fission yeast mcm2 mutant. The polypeptide is DNA replication licensing factor MCM2 (Oryza sativa subsp. japonica (Rice)).